We begin with the raw amino-acid sequence, 261 residues long: Protein OSB1, mitochondrial (261 aa).

The transit peptide at 1–28 (MNTFFKLGSLIQRTASQISSSFPKSRFF) directs the protein to the mitochondrion. In terms of domain architecture, SSB spans 55–155 (VNSVSLMGFV…VKVAEVNYVA (101 aa)). Residues 189-238 (WQVFFSNPYDWWDNRRNKKNPKQPDFKHKDTGEALWLCSDLPDWITRRLE) are PDF region.

As to expression, expressed in root elongation zone and in gametophytic cells.

The protein resides in the mitochondrion. Functionally, regulates mitochondrial DNA recombination. Represses homologous recombination, preventing mitochondrial genome instability and unbalanced transmission of alternative mtDNA configurations. Binds preferentially single-stranded DNA. Does not bind to RNA. This Arabidopsis thaliana (Mouse-ear cress) protein is Protein OSB1, mitochondrial (OSB1).